A 314-amino-acid chain; its full sequence is Trimethylamine N-oxide-binding protein (314 aa).

Positions 1–24 (MKKIVSLMSALVISVVSFAGISNA) are cleaved as a signal peptide. Residues Trp-38, Trp-85, Glu-114, Trp-164, and Trp-212 each coordinate trimethylamine N-oxide.

As to quaternary structure, the complex is probably composed of two ATP-binding proteins (TmoW), two transmembrane proteins (TmoV) and a solute-binding protein (TmoX).

The protein localises to the periplasm. Its function is as follows. Part of the ABC transporter complex TmoXWV involved in trimethylamine N-oxide (TMAO) import. Possesses a high binding affinity toward TMAO, but presents little binding affinity toward betaine, carnitine, trimethylamine (TMA) or dimethylamine (DMA). This Pelagibacter ubique (strain HTCC1062) protein is Trimethylamine N-oxide-binding protein.